The primary structure comprises 1127 residues: Carbamoyl phosphate synthase large chain (1127 aa).

A carboxyphosphate synthetic domain region spans residues 1 to 402 (MPKRTDIKSV…SLGKAMRSID (402 aa)). Residues Arg129, Arg169, Gly175, Gly176, Glu208, Ile210, Glu215, Gly241, Val242, His243, Gln285, and Glu299 each coordinate ATP. An ATP-grasp 1 domain is found at 133–328 (KKVVDEAGAE…IAKIATKLAL (196 aa)). Residues Gln285, Glu299, and Asn301 each contribute to the Mg(2+) site. Mn(2+) is bound by residues Gln285, Glu299, and Asn301. The interval 403-551 (KRHMGFNWDG…YYYSCYADET (149 aa)) is oligomerization domain. A carbamoyl phosphate synthetic domain region spans residues 552–962 (ELRPREREAV…AFAKSQLAAY (411 aa)). Positions 681 to 881 (GEVLKKAEMN…LAKAAARIMA (201 aa)) constitute an ATP-grasp 2 domain. ATP is bound by residues Arg717, Lys765, Leu767, Glu772, Gly797, Val798, His799, Ser800, Gln840, and Glu852. Mg(2+) contacts are provided by Gln840, Glu852, and Asn854. 3 residues coordinate Mn(2+): Gln840, Glu852, and Asn854. An allosteric domain region spans residues 963 to 1127 (DGGLPTHGNV…QLFELERREF (165 aa)). In terms of domain architecture, MGS-like spans 964 to 1127 (GGLPTHGNVF…QLFELERREF (164 aa)).

This sequence belongs to the CarB family. In terms of assembly, composed of two chains; the small (or glutamine) chain promotes the hydrolysis of glutamine to ammonia, which is used by the large (or ammonia) chain to synthesize carbamoyl phosphate. Tetramer of heterodimers (alpha,beta)4. Mg(2+) serves as cofactor. The cofactor is Mn(2+).

The enzyme catalyses hydrogencarbonate + L-glutamine + 2 ATP + H2O = carbamoyl phosphate + L-glutamate + 2 ADP + phosphate + 2 H(+). The catalysed reaction is hydrogencarbonate + NH4(+) + 2 ATP = carbamoyl phosphate + 2 ADP + phosphate + 2 H(+). It participates in amino-acid biosynthesis; L-arginine biosynthesis; carbamoyl phosphate from bicarbonate: step 1/1. The protein operates within pyrimidine metabolism; UMP biosynthesis via de novo pathway; (S)-dihydroorotate from bicarbonate: step 1/3. Large subunit of the glutamine-dependent carbamoyl phosphate synthetase (CPSase). CPSase catalyzes the formation of carbamoyl phosphate from the ammonia moiety of glutamine, carbonate, and phosphate donated by ATP, constituting the first step of 2 biosynthetic pathways, one leading to arginine and/or urea and the other to pyrimidine nucleotides. The large subunit (synthetase) binds the substrates ammonia (free or transferred from glutamine from the small subunit), hydrogencarbonate and ATP and carries out an ATP-coupled ligase reaction, activating hydrogencarbonate by forming carboxy phosphate which reacts with ammonia to form carbamoyl phosphate. The protein is Carbamoyl phosphate synthase large chain of Bifidobacterium longum (strain DJO10A).